We begin with the raw amino-acid sequence, 64 residues long: Large ribosomal subunit protein bL35 (64 aa).

This sequence belongs to the bacterial ribosomal protein bL35 family.

The sequence is that of Large ribosomal subunit protein bL35 from Shewanella putrefaciens (strain CN-32 / ATCC BAA-453).